The chain runs to 118 residues: UPF0449 protein C19orf25 homolog (118 aa).

Tyr63 bears the Phosphotyrosine mark. Residues 69 to 105 (YVAMNQRLQQAGAQLEQKRADLQQAGEELERDISQVG) are a coiled coil.

Belongs to the UPF0449 family.

This chain is UPF0449 protein C19orf25 homolog, found in Bos taurus (Bovine).